The following is a 164-amino-acid chain: 5-formyltetrahydrofolate cyclo-ligase (164 aa).

Position 3–7 (3–7) interacts with ATP; it reads KNALR. 2 residues coordinate substrate: glutamate 50 and glutamate 55. 115-123 is an ATP binding site; that stretch reads RLGFGKGYY. A Mg(2+)-binding site is contributed by aspartate 124. Residues arginine 125 and tryptophan 153 each contribute to the ATP site. Aspartate 154 contacts Mg(2+).

It belongs to the 5-formyltetrahydrofolate cyclo-ligase family. In terms of assembly, monomer or homodimer. It depends on Mg(2+) as a cofactor. The cofactor is Mn(2+). Ca(2+) serves as cofactor. Zn(2+) is required as a cofactor. Requires Fe(2+) as cofactor. It depends on Co(2+) as a cofactor. The cofactor is Cu(2+).

The protein resides in the cytoplasm. It carries out the reaction (6S)-5-formyl-5,6,7,8-tetrahydrofolate + ATP = (6R)-5,10-methenyltetrahydrofolate + ADP + phosphate. Involved in folate metabolism. Catalyzes the irreversible conversion of 5-formyltetrahydrofolate (5-FTHF) to yield 5,10-methenyltetrahydrofolate. This Mycoplasma pneumoniae (strain ATCC 29342 / M129 / Subtype 1) (Mycoplasmoides pneumoniae) protein is 5-formyltetrahydrofolate cyclo-ligase.